The chain runs to 536 residues: MEFSSPSREECPKPSGRVSIMAGSLTGLLLLQAVSWASGARPCIPKSFGYSSVVCVCNATYCDSFDPPTFPALGTFSRYESTRSGRRMELSMGTIQANHTGTGLLLTLQPEQKFQKVKGFGGAMTDAAALNILALSPPAQNLLLKSYFSEEGIGYNIIRVPMASCDFSIRTYTYADTPDDFQLHNFSLPEEDTKLKIPLIHRALQLAQRPVSLLASPWTSPTWLKTNGAVNGKGSLKGQPGDIYHQTWARYFVKFLDAYAEHKLQFWAVTAENEPSAGLLSGYPFQCLGFTPEHQRDFIARDLGPTLANSTHHNVRLLMLDDQRLLLPHWAKVVLTDPEAAKYVHGIAVHWYLDFLAPAKATLGETHRLFPNTMLFASEACVGSKFWEQSVRLGSWDRGMQYSHSIITNLLYHVVGWTDWNLALNPEGGPNWVRNFVDSPIIVDITKDTFYKQPMFYHLGHFSKFIPEGSQRVGLVASQKNDLDAVALMHPDGSAVVVVLNRSSKDVPLTIKDPAVGFLETISPGYSIHTYLWRRQ.

The signal sequence occupies residues 1 to 39; the sequence is MEFSSPSREECPKPSGRVSIMAGSLTGLLLLQAVSWASG. Cystine bridges form between Cys43–Cys55 and Cys57–Cys62. N-linked (GlcNAc...) asparagine glycosylation is found at Asn58, Asn98, and Asn185. Glu274 (proton donor) is an active-site residue. A glycan (N-linked (GlcNAc...) asparagine) is linked at Asn309. Catalysis depends on Glu379, which acts as the Nucleophile. An N-linked (GlcNAc...) asparagine glycan is attached at Asn501.

The protein belongs to the glycosyl hydrolase 30 family. In terms of assembly, interacts with saposin-C. Interacts with SCARB2. Interacts with TCP1. Interacts with GRN; this interaction prevents aggregation of GBA1-SCARB2 complex via interaction with HSPA1A upon stress.

It is found in the lysosome membrane. The catalysed reaction is a beta-D-glucosyl-(1&lt;-&gt;1')-N-acylsphing-4-enine + H2O = an N-acylsphing-4-enine + D-glucose. It carries out the reaction a beta-D-galactosyl-(1&lt;-&gt;1')-N-acylsphing-4-enine + H2O = an N-acylsphing-4-enine + D-galactose. It catalyses the reaction cholesteryl 3-beta-D-glucoside + H2O = cholesterol + D-glucose. The enzyme catalyses a beta-D-glucosyl-(1&lt;-&gt;1')-N-acylsphing-4-enine + cholesterol = cholesteryl 3-beta-D-glucoside + an N-acylsphing-4-enine. The catalysed reaction is beta-D-glucosyl-N-(9Z-octadecenoyl)-sphing-4E-enine + cholesterol = N-(9Z-octadecenoyl)-sphing-4-enine + cholesteryl 3-beta-D-glucoside. It carries out the reaction beta-D-glucosyl-N-octanoylsphing-4E-enine + cholesterol = N-octanoylsphing-4-enine + cholesteryl 3-beta-D-glucoside. It catalyses the reaction beta-D-glucosyl-N-dodecanoylsphing-4-enine + cholesterol = N-dodecanoylsphing-4-enine + cholesteryl 3-beta-D-glucoside. The enzyme catalyses beta-D-glucosyl-(1&lt;-&gt;1)-N-octadecanoylsphing-4-enine + cholesterol = N-octadecanoylsphing-4-enine + cholesteryl 3-beta-D-glucoside. The catalysed reaction is beta-D-glucosyl-(1&lt;-&gt;1')-N-(15Z-tetracosenoyl)-sphing-4-enine + cholesterol = N-(15Z-tetracosenoyl)-sphing-4-enine + cholesteryl 3-beta-D-glucoside. It carries out the reaction a beta-D-galactosyl-(1&lt;-&gt;1')-N-acylsphing-4-enine + cholesterol = cholesteryl 3-beta-D-galactoside + an N-acylsphing-4-enine. It catalyses the reaction 1-(beta-D-galactosyl)-N-dodecanoylsphing-4-enine + cholesterol = cholesteryl 3-beta-D-galactoside + N-dodecanoylsphing-4-enine. The enzyme catalyses a beta-D-xylosyl-(1&lt;-&gt;1')-N-acylsphing-4-enine + cholesterol = cholesteryl 3-beta-D-xyloside + an N-acylsphing-4-enine. The catalysed reaction is beta-D-xylosyl-(1&lt;-&gt;1')-N-(9Z-octadecenoyl)-sphing-4-enine + cholesterol = cholesteryl 3-beta-D-xyloside + N-(9Z-octadecenoyl)-sphing-4-enine. It functions in the pathway steroid metabolism; cholesterol metabolism. Its pathway is sphingolipid metabolism. Functionally, glucosylceramidase that catalyzes, within the lysosomal compartment, the hydrolysis of glucosylceramides/GlcCers (such as beta-D-glucosyl-(1&lt;-&gt;1')-N-acylsphing-4-enine) into free ceramides (such as N-acylsphing-4-enine) and glucose. Plays a central role in the degradation of complex lipids and the turnover of cellular membranes. Through the production of ceramides, participates in the PKC-activated salvage pathway of ceramide formation. Catalyzes the glucosylation of cholesterol, through a transglucosylation reaction where glucose is transferred from GlcCer to cholesterol. GlcCer containing mono-unsaturated fatty acids (such as beta-D-glucosyl-N-(9Z-octadecenoyl)-sphing-4-enine) are preferred as glucose donors for cholesterol glucosylation when compared with GlcCer containing same chain length of saturated fatty acids (such as beta-D-glucosyl-N-octadecanoyl-sphing-4-enine). Under specific conditions, may alternatively catalyze the reverse reaction, transferring glucose from cholesteryl 3-beta-D-glucoside to ceramide. Can also hydrolyze cholesteryl 3-beta-D-glucoside producing glucose and cholesterol. Catalyzes the hydrolysis of galactosylceramides/GalCers (such as beta-D-galactosyl-(1&lt;-&gt;1')-N-acylsphing-4-enine), as well as the transfer of galactose between GalCers and cholesterol in vitro, but with lower activity than with GlcCers. Contrary to GlcCer and GalCer, xylosylceramide/XylCer (such as beta-D-xyosyl-(1&lt;-&gt;1')-N-acylsphing-4-enine) is not a good substrate for hydrolysis, however it is a good xylose donor for transxylosylation activity to form cholesteryl 3-beta-D-xyloside. This Pan troglodytes (Chimpanzee) protein is Lysosomal acid glucosylceramidase (GBA1).